The sequence spans 416 residues: Ribulose bisphosphate carboxylase large chain (416 aa).

Positions 100 and 150 each coordinate substrate. K152 functions as the Proton acceptor in the catalytic mechanism. K154 lines the substrate pocket. Mg(2+) is bound by residues K178, D180, and E181. N6-carboxylysine is present on K178. H271 acts as the Proton acceptor in catalysis. Substrate-binding residues include R272, H304, and S356.

This sequence belongs to the RuBisCO large chain family. Type I subfamily. As to quaternary structure, heterohexadecamer of 8 large chains and 8 small chains; disulfide-linked. The disulfide link is formed within the large subunit homodimers. Mg(2+) serves as cofactor. Post-translationally, the disulfide bond which can form in the large chain dimeric partners within the hexadecamer appears to be associated with oxidative stress and protein turnover.

It localises to the plastid. The protein localises to the chloroplast. The catalysed reaction is 2 (2R)-3-phosphoglycerate + 2 H(+) = D-ribulose 1,5-bisphosphate + CO2 + H2O. It catalyses the reaction D-ribulose 1,5-bisphosphate + O2 = 2-phosphoglycolate + (2R)-3-phosphoglycerate + 2 H(+). RuBisCO catalyzes two reactions: the carboxylation of D-ribulose 1,5-bisphosphate, the primary event in carbon dioxide fixation, as well as the oxidative fragmentation of the pentose substrate in the photorespiration process. Both reactions occur simultaneously and in competition at the same active site. In Cheiropleuria bicuspis (Fern), this protein is Ribulose bisphosphate carboxylase large chain (rbcL).